The chain runs to 338 residues: Glycerol-3-phosphate dehydrogenase [NAD(P)+] (338 aa).

4 residues coordinate NADPH: S14, Y15, H35, and K109. Sn-glycerol 3-phosphate contacts are provided by K109, G138, and T140. An NADPH-binding site is contributed by A142. Residues K194, D247, S257, R258, and N259 each coordinate sn-glycerol 3-phosphate. K194 functions as the Proton acceptor in the catalytic mechanism. R258 contacts NADPH. 2 residues coordinate NADPH: V282 and E284.

It belongs to the NAD-dependent glycerol-3-phosphate dehydrogenase family.

It is found in the cytoplasm. The catalysed reaction is sn-glycerol 3-phosphate + NAD(+) = dihydroxyacetone phosphate + NADH + H(+). It carries out the reaction sn-glycerol 3-phosphate + NADP(+) = dihydroxyacetone phosphate + NADPH + H(+). It functions in the pathway membrane lipid metabolism; glycerophospholipid metabolism. Catalyzes the reduction of the glycolytic intermediate dihydroxyacetone phosphate (DHAP) to sn-glycerol 3-phosphate (G3P), the key precursor for phospholipid synthesis. The protein is Glycerol-3-phosphate dehydrogenase [NAD(P)+] of Shewanella sp. (strain MR-4).